A 134-amino-acid polypeptide reads, in one-letter code: Late embryogenesis abundant protein 6 (134 aa).

Residues 31–45 are compositionally biased toward basic and acidic residues; it reads ERAMARTKEEKEIAH. 2 disordered regions span residues 31–53 and 80–134; these read ERAM…AKEA and VTDH…HHHY. Residues 34-70 adopt a coiled-coil conformation; the sequence is MARTKEEKEIAHQRRKAKEAEANMDMHMAKAAHAEDK. Over residues 115–127 the composition is skewed to low complexity; the sequence is PPQTYHPTYPPTG.

The protein belongs to the LEA type 1 family.

Involved dehydration tolerance. Involved in the adaptive response of vascular plants to withstand water deficit. May possess chaperone-like activity under water deficit. This is Late embryogenesis abundant protein 6 from Arabidopsis thaliana (Mouse-ear cress).